The chain runs to 202 residues: Imidazole glycerol phosphate synthase subunit HisH 2 (202 aa).

Residues 1 to 202 (MIVVIDYGVG…QLFKNFVELV (202 aa)) enclose the Glutamine amidotransferase type-1 domain. The active-site Nucleophile is Cys80. Active-site residues include His183 and Glu185.

As to quaternary structure, heterodimer of HisH and HisF.

The protein localises to the cytoplasm. It catalyses the reaction 5-[(5-phospho-1-deoxy-D-ribulos-1-ylimino)methylamino]-1-(5-phospho-beta-D-ribosyl)imidazole-4-carboxamide + L-glutamine = D-erythro-1-(imidazol-4-yl)glycerol 3-phosphate + 5-amino-1-(5-phospho-beta-D-ribosyl)imidazole-4-carboxamide + L-glutamate + H(+). It carries out the reaction L-glutamine + H2O = L-glutamate + NH4(+). It functions in the pathway amino-acid biosynthesis; L-histidine biosynthesis; L-histidine from 5-phospho-alpha-D-ribose 1-diphosphate: step 5/9. Its function is as follows. IGPS catalyzes the conversion of PRFAR and glutamine to IGP, AICAR and glutamate. The HisH subunit catalyzes the hydrolysis of glutamine to glutamate and ammonia as part of the synthesis of IGP and AICAR. The resulting ammonia molecule is channeled to the active site of HisF. This is Imidazole glycerol phosphate synthase subunit HisH 2 (hisH2) from Pseudomonas aeruginosa (strain ATCC 15692 / DSM 22644 / CIP 104116 / JCM 14847 / LMG 12228 / 1C / PRS 101 / PAO1).